The sequence spans 174 residues: Peroxisome assembly protein 22 (174 aa).

Residues 9-27 (GYLAIIAAVSIGAAAYLWW) traverse the membrane as a helical segment.

The protein belongs to the peroxin-22 family.

It is found in the peroxisome membrane. In terms of biological role, involved in peroxisome biogenesis. This Candida glabrata (strain ATCC 2001 / BCRC 20586 / JCM 3761 / NBRC 0622 / NRRL Y-65 / CBS 138) (Yeast) protein is Peroxisome assembly protein 22 (PEX22).